The following is a 283-amino-acid chain: Protein FDD123 (283 aa).

Transmembrane regions (helical) follow at residues 24–44 (WLWAAFSVFGVSLLTVVAWTF), 52–72 (LFHQIAIVVLTTGSLAYFSMA), 97–117 (YIQWFITFPLLLLELLLATGL), 122–142 (IFTTLFMSIVLVITGLVAALV), 148–168 (WGYYTFGVSALFYIWYVLLWH), 185–205 (ILAAGYLSFLLLLYPIAWACA), and 217–237 (MIWYGILDIFAGPIFLFFFLW).

This sequence belongs to the archaeal/bacterial/fungal opsin family.

The protein localises to the membrane. In Trametes versicolor (White-rot fungus), this protein is Protein FDD123 (FDD123).